A 214-amino-acid polypeptide reads, in one-letter code: Uracil phosphoribosyltransferase (214 aa).

5-phospho-alpha-D-ribose 1-diphosphate contacts are provided by residues Arg81, Arg106, and 133 to 141 (DPMLATGNS). Uracil-binding positions include Ile196 and 201-203 (GDA). Asp202 serves as a coordination point for 5-phospho-alpha-D-ribose 1-diphosphate.

Belongs to the UPRTase family. Mg(2+) is required as a cofactor.

The enzyme catalyses UMP + diphosphate = 5-phospho-alpha-D-ribose 1-diphosphate + uracil. Its pathway is pyrimidine metabolism; UMP biosynthesis via salvage pathway; UMP from uracil: step 1/1. Allosterically activated by GTP. In terms of biological role, catalyzes the conversion of uracil and 5-phospho-alpha-D-ribose 1-diphosphate (PRPP) to UMP and diphosphate. This chain is Uracil phosphoribosyltransferase, found in Legionella pneumophila (strain Paris).